The sequence spans 568 residues: DNA ligase (568 aa).

Position 249 (Glu249) interacts with ATP. Lys251 serves as the catalytic N6-AMP-lysine intermediate. Arg256, Arg271, Glu301, Phe342, Arg418, and Lys424 together coordinate ATP.

It belongs to the ATP-dependent DNA ligase family. Mg(2+) serves as cofactor.

The enzyme catalyses ATP + (deoxyribonucleotide)n-3'-hydroxyl + 5'-phospho-(deoxyribonucleotide)m = (deoxyribonucleotide)n+m + AMP + diphosphate.. Functionally, DNA ligase that seals nicks in double-stranded DNA during DNA replication, DNA recombination and DNA repair. This chain is DNA ligase, found in Methanocella arvoryzae (strain DSM 22066 / NBRC 105507 / MRE50).